We begin with the raw amino-acid sequence, 520 residues long: Serine/threonine-protein kinases drp72 (520 aa).

The Protein kinase domain maps to 20-281 (YTLQWIVGHG…NELARAVSAV (262 aa)). ATP is bound by residues 26–34 (VGHGGMSTV) and K49. D148 acts as the Proton acceptor in catalysis. 2 disordered regions span residues 315-334 (ARPT…RQEK) and 366-504 (SGDS…DAAD). Residues 374 to 394 (TPETITQTVTPTETTTSEEPT) are compositionally biased toward low complexity. Residues 395–411 (LAPPPVQPTRQPVPTPD) show a composition bias toward pro residues. Positions 416–429 (RLPTTTQESPTRVS) are enriched in polar residues. The segment covering 440-449 (EQTTPGGQPP) has biased composition (low complexity). Residues 450 to 460 (LSTLPTSLGWQ) show a composition bias toward polar residues. Residues 469–484 (QGNPNTTGNPANPGTP) show a composition bias toward low complexity. Residues 485–496 (GTTGGNGTGNAG) are compositionally biased toward gly residues.

The protein belongs to the protein kinase superfamily. Ser/Thr protein kinase family.

The catalysed reaction is L-seryl-[protein] + ATP = O-phospho-L-seryl-[protein] + ADP + H(+). It catalyses the reaction L-threonyl-[protein] + ATP = O-phospho-L-threonyl-[protein] + ADP + H(+). This chain is Serine/threonine-protein kinases drp72, found in Corynebacterium efficiens (strain DSM 44549 / YS-314 / AJ 12310 / JCM 11189 / NBRC 100395).